The sequence spans 180 residues: ATP-dependent protease subunit HslV (180 aa).

Residue threonine 5 is part of the active site. 3 residues coordinate Na(+): glycine 165, cysteine 168, and threonine 171.

Belongs to the peptidase T1B family. HslV subfamily. As to quaternary structure, a double ring-shaped homohexamer of HslV is capped on each side by a ring-shaped HslU homohexamer. The assembly of the HslU/HslV complex is dependent on binding of ATP.

It localises to the cytoplasm. It catalyses the reaction ATP-dependent cleavage of peptide bonds with broad specificity.. Its activity is regulated as follows. Allosterically activated by HslU binding. Protease subunit of a proteasome-like degradation complex believed to be a general protein degrading machinery. The sequence is that of ATP-dependent protease subunit HslV from Helicobacter pylori (strain P12).